The primary structure comprises 162 residues: Dihydrofolate reductase (162 aa).

One can recognise a DHFR domain in the interval 3–161 (KITIIAACAE…VAYTFVHYLG (159 aa)). 7–9 (IAA) is a substrate binding site. NADP(+)-binding positions include 8-9 (AA) and 16-21 (IGAGNA). D29 is a substrate binding site. An NADP(+)-binding site is contributed by 45-48 (GRKT). R60 is a substrate binding site. NADP(+) is bound by residues 65–68 (ISRQ) and 98–103 (MGGAQI). Residue T117 coordinates substrate.

This sequence belongs to the dihydrofolate reductase family.

The enzyme catalyses (6S)-5,6,7,8-tetrahydrofolate + NADP(+) = 7,8-dihydrofolate + NADPH + H(+). Its pathway is cofactor biosynthesis; tetrahydrofolate biosynthesis; 5,6,7,8-tetrahydrofolate from 7,8-dihydrofolate: step 1/1. Its function is as follows. Key enzyme in folate metabolism. Catalyzes an essential reaction for de novo glycine and purine synthesis, and for DNA precursor synthesis. The chain is Dihydrofolate reductase (folA) from Neisseria gonorrhoeae.